Here is a 90-residue protein sequence, read N- to C-terminus: Small ribosomal subunit protein uS17 (90 aa).

The protein belongs to the universal ribosomal protein uS17 family. In terms of assembly, part of the 30S ribosomal subunit.

Its function is as follows. One of the primary rRNA binding proteins, it binds specifically to the 5'-end of 16S ribosomal RNA. The protein is Small ribosomal subunit protein uS17 of Cutibacterium acnes (strain DSM 16379 / KPA171202) (Propionibacterium acnes).